Reading from the N-terminus, the 389-residue chain is Indole-3-acetate monooxygenase (389 aa).

Belongs to the HpaH/HsaA monooxygenase family.

It catalyses the reaction (indol-3-yl)acetate + NADH + O2 + H(+) = 2-hydroxy-(1H-indol-3-yl)acetate + NAD(+) + H2O. The catalysed reaction is indole + NADH + O2 + H(+) = indoxyl + NAD(+) + H2O. In terms of biological role, involved in the degradation of the plant hormone indole-3-acetic acid (IAA). Catalyzes the first step of the pathway, the conversion of IAA to 2-hydroxy-IAA (2-OH-IAA). Can also convert indole to indoxyl, which spontaneously dimerizes in the presence of oxygen to form the blue pigment indigo. The protein is Indole-3-acetate monooxygenase of Pseudomonas putida (Arthrobacter siderocapsulatus).